We begin with the raw amino-acid sequence, 165 residues long: DNA mimic protein DMP19 (165 aa).

The protein belongs to the DMP19-like protein family. Monomer. Homodimer. The monomeric form of DMP19 interacts with the DNA-binding protein HU homodimer with 1:1 stoichiometry. The dimeric form of DMP19 interacts with the Neisseria hypothetical transcription factor (NHTF) dimer.

With respect to regulation, activity can be modulated in vitro by crown ethers, which are small cyclic polyethers that can modify protein surface behavior dramatically by stabilizing either intra- or intermolecular interactions, thereby probably altering the protein's tertiary and quaternary structure. Functionally, acts as a DNA mimic. Interacts with DNA-binding proteins and prevents their binding to DNA by occupying the DNA binding sites on the proteins, acting as a competitive inhibitor. DMP19 is a bifunctional DNA mimic protein involved in controlling nucleoid formation as well as gene regulation. This bifunctionality depends on different oligomeric states. The monomeric form interacts with the DNA-binding protein HU, which prevents HU from binding to DNA and forming nucleoids. The dimeric form interacts with the Neisseria hypothetical transcription factor (NHTF) and prevents NHTF from binding to its DNA-binding sites, thereby blocking its repressor activity and influencing expression of the target genes. DMP19 might use these different oligomerizations to regulate genes in two steps: the monomeric form may first release selected gene regions in chromosomal DNA by preventing HU from binding to DNA and forming nucleoids, then the dimeric form blocks the gene repressor activity of NHTF and ensures the continued expression of NHTF-controlled genes. The protein is DNA mimic protein DMP19 of Neisseria meningitidis serogroup B (strain ATCC BAA-335 / MC58).